The chain runs to 237 residues: Phosphoribosylaminoimidazole-succinocarboxamide synthase (237 aa).

It belongs to the SAICAR synthetase family.

It catalyses the reaction 5-amino-1-(5-phospho-D-ribosyl)imidazole-4-carboxylate + L-aspartate + ATP = (2S)-2-[5-amino-1-(5-phospho-beta-D-ribosyl)imidazole-4-carboxamido]succinate + ADP + phosphate + 2 H(+). It functions in the pathway purine metabolism; IMP biosynthesis via de novo pathway; 5-amino-1-(5-phospho-D-ribosyl)imidazole-4-carboxamide from 5-amino-1-(5-phospho-D-ribosyl)imidazole-4-carboxylate: step 1/2. The polypeptide is Phosphoribosylaminoimidazole-succinocarboxamide synthase (Alteromonas mediterranea (strain DSM 17117 / CIP 110805 / LMG 28347 / Deep ecotype)).